The primary structure comprises 282 residues: Lipoyl synthase (282 aa).

Positions 37, 42, 48, 63, 67, 70, and 275 each coordinate [4Fe-4S] cluster. The Radical SAM core domain maps to 49-264; the sequence is WSRGTATFMI…RLVGIEKGFR (216 aa).

It belongs to the radical SAM superfamily. Lipoyl synthase family. [4Fe-4S] cluster serves as cofactor.

The protein resides in the cytoplasm. The enzyme catalyses [[Fe-S] cluster scaffold protein carrying a second [4Fe-4S](2+) cluster] + N(6)-octanoyl-L-lysyl-[protein] + 2 oxidized [2Fe-2S]-[ferredoxin] + 2 S-adenosyl-L-methionine + 4 H(+) = [[Fe-S] cluster scaffold protein] + N(6)-[(R)-dihydrolipoyl]-L-lysyl-[protein] + 4 Fe(3+) + 2 hydrogen sulfide + 2 5'-deoxyadenosine + 2 L-methionine + 2 reduced [2Fe-2S]-[ferredoxin]. Its pathway is protein modification; protein lipoylation via endogenous pathway; protein N(6)-(lipoyl)lysine from octanoyl-[acyl-carrier-protein]: step 2/2. Its function is as follows. Catalyzes the radical-mediated insertion of two sulfur atoms into the C-6 and C-8 positions of the octanoyl moiety bound to the lipoyl domains of lipoate-dependent enzymes, thereby converting the octanoylated domains into lipoylated derivatives. This Porphyromonas gingivalis (strain ATCC 33277 / DSM 20709 / CIP 103683 / JCM 12257 / NCTC 11834 / 2561) protein is Lipoyl synthase.